Consider the following 573-residue polypeptide: E3 ubiquitin-protein ligase TRIM23 (573 aa).

The segment at 31–76 adopts an RING-type; degenerate zinc-finger fold; the sequence is CGVCEDVFSLQGDKVPRLLLCGHTVCHDCLTRLPLHGRAIRCPFDR. A B box-type; degenerate zinc finger spans residues 122–168; sequence ESIIRCDEDEAHVASVYCTVCATHLCSECSQVTHSTKTLAKHRRVPL. A coiled-coil region spans residues 351–378; the sequence is RVVLAKQEITRLLETLQKQQQQFTEVAD. Residues 390-573 are ARF-like; it reads FTKDNRVYHG…LVAAGVLDVA (184 aa). Residues 411 to 418, 454 to 458, and 513 to 516 each bind GTP; these read LDGAGKTT, VGGKH, and KQDV.

The protein in the C-terminal section; belongs to the small GTPase superfamily. Arf family. In terms of assembly, homodimer. Interacts with PSCD1. Interacts with UBE2D2. Interacts with TBK1 (via N-terminal kinase domain) and p62/SQSTM1.

It localises to the cytoplasm. It is found in the endomembrane system. Its subcellular location is the golgi apparatus membrane. The protein resides in the lysosome membrane. It catalyses the reaction S-ubiquitinyl-[E2 ubiquitin-conjugating enzyme]-L-cysteine + [acceptor protein]-L-lysine = [E2 ubiquitin-conjugating enzyme]-L-cysteine + N(6)-ubiquitinyl-[acceptor protein]-L-lysine.. The protein operates within protein modification; protein ubiquitination. Its function is as follows. Acts as an E3 ubiquitin-protein ligase. Plays an essential role in autophagy activation during viral infection. Mechanistically, activates TANK-binding kinase 1/TBK1 by facilitating its dimerization and ability to phosphorylate the selective autophagy receptor SQSTM1. In order to achieve this function, TRIM23 mediates 'Lys-27'-linked auto-ubiquitination of its ADP-ribosylation factor (ARF) domain to induce its GTPase activity and its recruitment to autophagosomes. The protein is E3 ubiquitin-protein ligase TRIM23 (Trim23) of Rattus norvegicus (Rat).